The following is a 145-amino-acid chain: Small ribosomal subunit protein eS19 (145 aa).

The residue at position 23 (lysine 23) is an N6-acetyllysine. Arginine 67 carries the post-translational modification Omega-N-methylarginine. N6-acetyllysine occurs at positions 111 and 115. An N6-succinyllysine modification is found at lysine 143.

The protein belongs to the eukaryotic ribosomal protein eS19 family. Component of the small ribosomal subunit. Part of the small subunit (SSU) processome, composed of more than 70 proteins and the RNA chaperone small nucleolar RNA (snoRNA) U3. Interacts with RPS19BP1; the interaction is direct and mediates the integration of RPS19 in state post-A1. Interacts with RPS19BP1.

The protein resides in the cytoplasm. Its subcellular location is the nucleus. It is found in the nucleolus. Component of the small ribosomal subunit. The ribosome is a large ribonucleoprotein complex responsible for the synthesis of proteins in the cell. Required for pre-rRNA processing and maturation of 40S ribosomal subunits. Part of the small subunit (SSU) processome, first precursor of the small eukaryotic ribosomal subunit. During the assembly of the SSU processome in the nucleolus, many ribosome biogenesis factors, an RNA chaperone and ribosomal proteins associate with the nascent pre-rRNA and work in concert to generate RNA folding, modifications, rearrangements and cleavage as well as targeted degradation of pre-ribosomal RNA by the RNA exosome. This Oryctolagus cuniculus (Rabbit) protein is Small ribosomal subunit protein eS19 (RPS19).